A 25-amino-acid chain; its full sequence is Antifungal protein 1 (25 aa).

The segment at 1–25 (QSERFEQQMQGQDFSHDERFLSQAA) is disordered. Positions 14 to 25 (FSHDERFLSQAA) are enriched in basic and acidic residues.

Belongs to the 2S seed storage albumins family. Expressed in seed (at protein level). Not detected in pulp, stems and leaves.

Has strong antifungal activity against T.harzianum, F.oxysporum and A.fumigatus with IC(50) values of 32 ug/ml, 34 ug/ml and 40 ug/ml, restectively. Lacks antifungal activity against R.solani, P.brasiliensis and C.albicans. The sequence is that of Antifungal protein 1 from Passiflora edulis (Passion fruit).